The primary structure comprises 115 residues: T-cell receptor gamma chain V region V108B (115 aa).

A signal peptide spans 1-18 (MLLLRWPTFCCLWVFGLG). Residues 19-115 (QLEQTELSVT…EATYYCAVWI (97 aa)) are v segment.

This Mus musculus (Mouse) protein is T-cell receptor gamma chain V region V108B (Tcrg-V1).